The primary structure comprises 280 residues: UPF0494 membrane protein SPAC212.01c (280 aa).

4 helical membrane passes run 107–127, 144–164, 178–198, and 199–219; these read WPLLIIWSIIIVFAVDKKFEV, IWVPIAIYVCLLVLMLLSLIF, VIIAVLGAVLGMIIAVLGMII, and AALGMIIAALGATITGLLYFG.

This sequence belongs to the UPF0494 family.

The protein localises to the membrane. This chain is UPF0494 membrane protein SPAC212.01c, found in Schizosaccharomyces pombe (strain 972 / ATCC 24843) (Fission yeast).